The sequence spans 299 residues: GTPase Era (299 aa).

Positions 5–175 (RSGFVCLVGR…IDVLAAALPP (171 aa)) constitute an Era-type G domain. The segment at 13–20 (GRPNTGKS) is G1. Residue 13 to 20 (GRPNTGKS) coordinates GTP. Residues 39 to 43 (QTTRH) form a G2 region. A G3 region spans residues 60-63 (DTPG). Residues 60–64 (DTPGL) and 124–127 (TKID) contribute to the GTP site. The G4 stretch occupies residues 124–127 (TKID). The interval 154 to 156 (VSA) is G5. The KH type-2 domain occupies 206 to 285 (VRDELPHSLA…YLDLRVKVAK (80 aa)).

The protein belongs to the TRAFAC class TrmE-Era-EngA-EngB-Septin-like GTPase superfamily. Era GTPase family. Monomer.

The protein localises to the cell envelope. It is found in the secreted. The protein resides in the cell wall. Functionally, exhibits GTPase activity. Binds RNA but is probably not involved in ribosome assembly in mycobacteria. The polypeptide is GTPase Era (Mycolicibacterium paratuberculosis (strain ATCC BAA-968 / K-10) (Mycobacterium paratuberculosis)).